Here is a 137-residue protein sequence, read N- to C-terminus: MAHRSHTGTGPSQRQLRVGELIRRTLADVLNRGEIHDPELNRLSITVGEVRCSPDLKVATVHVMPLGGKDVEEAIALLSKHRGELRHHITRQMTLKYAPDLRFRPDETFDRLDETRRLFSDETVMRDIRGGGEADED.

This sequence belongs to the RbfA family. Monomer. Binds 30S ribosomal subunits, but not 50S ribosomal subunits or 70S ribosomes.

It is found in the cytoplasm. Its function is as follows. One of several proteins that assist in the late maturation steps of the functional core of the 30S ribosomal subunit. Associates with free 30S ribosomal subunits (but not with 30S subunits that are part of 70S ribosomes or polysomes). Required for efficient processing of 16S rRNA. May interact with the 5'-terminal helix region of 16S rRNA. This Cereibacter sphaeroides (strain KD131 / KCTC 12085) (Rhodobacter sphaeroides) protein is Ribosome-binding factor A.